A 709-amino-acid polypeptide reads, in one-letter code: Rho guanine nucleotide exchange factor 16 (709 aa).

Position 2 is an N-acetylalanine (Ala2). 3 positions are modified to phosphoserine: Ser6, Ser41, and Ser107. Residues 22–70 (ELRLDAGGNPASGLPMVRGSPRVRDDAAFQPQVPAPPQPRPPGHEEPWP) form a disordered region. Residues 114–146 (SREAARRDPKLLPAPSFSLDDMDVDKDPGGMLR) are disordered. A phosphoserine mark is found at Ser174, Ser191, and Ser208. Residues 180 to 246 (LAEEPSQPHT…ESSSPEGTQK (67 aa)) are disordered. A compositionally biased stretch (basic residues) spans 191–207 (SPAKNKKTLGRKRGHKG). Thr226 is subject to Phosphothreonine. 3 positions are modified to phosphoserine: Ser227, Ser230, and Ser240. Residues 275-481 (LDQLSTEERK…MERMEQMYTL (207 aa)) form a required for RHOG activation and mediates interaction with EPHA2 region. The DH domain occupies 284-468 (KRQEAMFEIL…SKLVRQCNEG (185 aa)). The region spanning 501 to 620 (WLLKRGELFL…WIVALTHSER (120 aa)) is the PH domain. Residues 629–689 (GDLPQVEITK…PEDFARFITS (61 aa)) form the SH3 domain. The short motif at 707 to 709 (TDV) is the PDZ-binding motif element.

Interacts with ELMO2, EPHA2, RAC1 and RHOG; mediates activation of RAC1 by EPHA2. Interacts with TAX1BP3 (via PDZ domain). May interact with CDC42; stimulated by HPV16 E6.

The protein resides in the cytoplasm. Functionally, guanyl-nucleotide exchange factor of the RHOG GTPase stimulating the exchange of RHOG-associated GDP for GTP. May play a role in chemotactic cell migration by mediating the activation of RAC1 by EPHA2. May also activate CDC42 and mediate activation of CDC42 by the viral protein HPV16 E6. The chain is Rho guanine nucleotide exchange factor 16 (ARHGEF16) from Homo sapiens (Human).